We begin with the raw amino-acid sequence, 272 residues long: Endoplasmic reticulum resident protein 27 (272 aa).

An N-terminal signal peptide occupies residues 1-25 (MKITRSRCLILSFVLVCGLVPEVTA). Positions 39–152 (EPIWLTDVPA…WVTEYSPMIA (114 aa)) constitute a Thioredoxin domain. 2 N-linked (GlcNAc...) asparagine glycosylation sites follow: Asn-91 and Asn-100. The segment at 230–233 (DKWD) is PDIA3-binding site. A Prevents secretion from ER motif is present at residues 269–272 (KEEL).

The protein belongs to the protein disulfide isomerase family. As to quaternary structure, interacts with PDIA3.

The protein resides in the endoplasmic reticulum lumen. Functionally, specifically binds unfolded proteins and may recruit protein disulfide isomerase PDIA3 to unfolded substrates. Binds protein substrates via a hydrophobic pocket in the C-terminal domain. May play a role in the unfolded stress response. In Mus musculus (Mouse), this protein is Endoplasmic reticulum resident protein 27 (Erp27).